Here is a 346-residue protein sequence, read N- to C-terminus: Histone PARylation factor 1 (346 aa).

Position 1 is an N-acetylmethionine (Met-1). A compositionally biased stretch (basic residues) spans 1-10 (MVGGGAKRRL). Residues 1–29 (MVGGGAKRRLRGEGPQCEKPVDMKKSKSC) are disordered. An N6-acetyllysine modification is found at Lys-19. The segment covering 19-29 (KPVDMKKSKSC) has biased composition (basic and acidic residues). An ADP-ribosylserine modification is found at Ser-97. N6-acetyllysine is present on residues Lys-186 and Lys-233. A PolyADP-ribosyl aspartic acid modification is found at Asp-235. The residue at position 238 (Tyr-238) is an ADP-ribosyltyrosine. Glu-240 is modified (polyADP-ribosyl glutamic acid). The interval 242–346 (PETDASLRRI…SQDDVDQLAA (105 aa)) is interaction with PARP1. Residue Glu-284 is the Proton donor of the active site.

Belongs to the HPF1 family. As to quaternary structure, interacts with PARP1 (via the PARP catalytic domain). Interacts with PARP2 (via the PARP catalytic domain). Interacts with core nucleosomes in a PARP1- and PARP2-dependent manner.

Its subcellular location is the chromosome. It is found in the nucleus. Cofactor for serine ADP-ribosylation that confers serine specificity on PARP1 and PARP2 and plays a key role in DNA damage response. Initiates the repair of double-strand DNA breaks: recruited to DNA damage sites by PARP1 and PARP2 and switches the amino acid specificity of PARP1 and PARP2 from aspartate or glutamate to serine residues, licensing serine ADP-ribosylation of target proteins. Serine ADP-ribosylation of target proteins, such as histones, promotes decompaction of chromatin and the recruitment of repair factors leading to the reparation of DNA strand breaks. Serine ADP-ribosylation of proteins constitutes the primary form of ADP-ribosylation of proteins in response to DNA damage. HPF1 acts by completing the active site of PARP1 and PARP2: forms a composite active site composed of residues from HPF1 and PARP1 or PARP2. While HPF1 promotes the initiation of serine ADP-ribosylation, it restricts the polymerase activity of PARP1 and PARP2 in order to limit the length of poly-ADP-ribose chains. HPF1 also promotes tyrosine ADP-ribosylation, probably by conferring tyrosine specificity on PARP1. In Bos taurus (Bovine), this protein is Histone PARylation factor 1.